Reading from the N-terminus, the 72-residue chain is Translation initiation factor IF-1 (72 aa).

Residues 1-72 (MAKEGNIEME…SKGRIVYRAR (72 aa)) enclose the S1-like domain.

This sequence belongs to the IF-1 family. As to quaternary structure, component of the 30S ribosomal translation pre-initiation complex which assembles on the 30S ribosome in the order IF-2 and IF-3, IF-1 and N-formylmethionyl-tRNA(fMet); mRNA recruitment can occur at any time during PIC assembly.

Its subcellular location is the cytoplasm. Functionally, one of the essential components for the initiation of protein synthesis. Stabilizes the binding of IF-2 and IF-3 on the 30S subunit to which N-formylmethionyl-tRNA(fMet) subsequently binds. Helps modulate mRNA selection, yielding the 30S pre-initiation complex (PIC). Upon addition of the 50S ribosomal subunit IF-1, IF-2 and IF-3 are released leaving the mature 70S translation initiation complex. In Hahella chejuensis (strain KCTC 2396), this protein is Translation initiation factor IF-1.